Reading from the N-terminus, the 761-residue chain is Phosphoribosylformylglycinamidine synthase subunit PurL (761 aa).

Residue His58 is part of the active site. Residues Tyr61 and Lys105 each coordinate ATP. Glu107 provides a ligand contact to Mg(2+). Residues 108 to 111 and Arg130 contribute to the substrate site; that span reads SHNH. His109 functions as the Proton acceptor in the catalytic mechanism. Asp131 contributes to the Mg(2+) binding site. Gln259 is a binding site for substrate. Asp287 is a Mg(2+) binding site. Position 331–333 (331–333) interacts with substrate; sequence ESQ. ATP is bound by residues Asn519 and Gly556. Asn557 lines the Mg(2+) pocket. Ser559 provides a ligand contact to substrate.

This sequence belongs to the FGAMS family. Monomer. Part of the FGAM synthase complex composed of 1 PurL, 1 PurQ and 2 PurS subunits.

The protein resides in the cytoplasm. It carries out the reaction N(2)-formyl-N(1)-(5-phospho-beta-D-ribosyl)glycinamide + L-glutamine + ATP + H2O = 2-formamido-N(1)-(5-O-phospho-beta-D-ribosyl)acetamidine + L-glutamate + ADP + phosphate + H(+). It functions in the pathway purine metabolism; IMP biosynthesis via de novo pathway; 5-amino-1-(5-phospho-D-ribosyl)imidazole from N(2)-formyl-N(1)-(5-phospho-D-ribosyl)glycinamide: step 1/2. In terms of biological role, part of the phosphoribosylformylglycinamidine synthase complex involved in the purines biosynthetic pathway. Catalyzes the ATP-dependent conversion of formylglycinamide ribonucleotide (FGAR) and glutamine to yield formylglycinamidine ribonucleotide (FGAM) and glutamate. The FGAM synthase complex is composed of three subunits. PurQ produces an ammonia molecule by converting glutamine to glutamate. PurL transfers the ammonia molecule to FGAR to form FGAM in an ATP-dependent manner. PurS interacts with PurQ and PurL and is thought to assist in the transfer of the ammonia molecule from PurQ to PurL. The polypeptide is Phosphoribosylformylglycinamidine synthase subunit PurL (Rhodococcus jostii (strain RHA1)).